Consider the following 264-residue polypeptide: MKSKLKLHGFNNLTKTLSFNIYDICYAETPEDLQAYVQYIDEEYDAERLTQILTDVVDIIGANILNIARQDYDPQGASVTILISEQPVTPTDSQIEESPGPLPDTILAHLDKSHITVHTYPEIHPVDGIATFRVDIDVSTCGVISPLKALNYLIHQFDSDIVTVDYRVRGFTRDIEGRKHFIDHEINSIQNYLSDDTREAYQMTDVNVYQENLFHTKMLLKDFELENYLFGDATRTLSTEQREQVTERLKHEMLEIFYARNMPR.

The active-site Schiff-base intermediate with substrate; via pyruvic acid is the S113. S113 is subject to Pyruvic acid (Ser); by autocatalysis. The Proton acceptor; for processing activity role is filled by H118. C141 functions as the Proton donor; for catalytic activity in the catalytic mechanism.

This sequence belongs to the prokaryotic AdoMetDC family. Type 2 subfamily. In terms of assembly, heterooctamer of four alpha and four beta chains arranged as a tetramer of alpha/beta heterodimers. Pyruvate serves as cofactor. In terms of processing, is synthesized initially as an inactive proenzyme. Formation of the active enzyme involves a self-maturation process in which the active site pyruvoyl group is generated from an internal serine residue via an autocatalytic post-translational modification. Two non-identical subunits are generated from the proenzyme in this reaction, and the pyruvate is formed at the N-terminus of the alpha chain, which is derived from the carboxyl end of the proenzyme. The post-translation cleavage follows an unusual pathway, termed non-hydrolytic serinolysis, in which the side chain hydroxyl group of the serine supplies its oxygen atom to form the C-terminus of the beta chain, while the remainder of the serine residue undergoes an oxidative deamination to produce ammonia and the pyruvoyl group blocking the N-terminus of the alpha chain.

It carries out the reaction S-adenosyl-L-methionine + H(+) = S-adenosyl 3-(methylsulfanyl)propylamine + CO2. It functions in the pathway amine and polyamine biosynthesis; S-adenosylmethioninamine biosynthesis; S-adenosylmethioninamine from S-adenosyl-L-methionine: step 1/1. Its function is as follows. Catalyzes the decarboxylation of S-adenosylmethionine to S-adenosylmethioninamine (dcAdoMet), the propylamine donor required for the synthesis of the polyamines spermine and spermidine from the diamine putrescine. This is S-adenosylmethionine decarboxylase proenzyme from Pseudomonas aeruginosa (strain UCBPP-PA14).